The following is a 208-amino-acid chain: Large ribosomal subunit protein bL25 (208 aa).

Belongs to the bacterial ribosomal protein bL25 family. CTC subfamily. In terms of assembly, part of the 50S ribosomal subunit; part of the 5S rRNA/L5/L18/L25 subcomplex. Contacts the 5S rRNA. Binds to the 5S rRNA independently of L5 and L18.

This is one of the proteins that binds to the 5S RNA in the ribosome where it forms part of the central protuberance. This chain is Large ribosomal subunit protein bL25, found in Burkholderia pseudomallei (strain K96243).